Consider the following 238-residue polypeptide: 3-dehydroquinate dehydratase (238 aa).

Residues 35-37 and Arg-70 contribute to the 3-dehydroquinate site; that span reads ELR. The Proton donor/acceptor role is filled by His-133. Lys-160 acts as the Schiff-base intermediate with substrate in catalysis. Residues Arg-202 and Gln-225 each coordinate 3-dehydroquinate.

The protein belongs to the type-I 3-dehydroquinase family. Homodimer.

It carries out the reaction 3-dehydroquinate = 3-dehydroshikimate + H2O. It participates in metabolic intermediate biosynthesis; chorismate biosynthesis; chorismate from D-erythrose 4-phosphate and phosphoenolpyruvate: step 3/7. Involved in the third step of the chorismate pathway, which leads to the biosynthesis of aromatic amino acids. Catalyzes the cis-dehydration of 3-dehydroquinate (DHQ) and introduces the first double bond of the aromatic ring to yield 3-dehydroshikimate. The polypeptide is 3-dehydroquinate dehydratase (Staphylococcus aureus (strain Mu3 / ATCC 700698)).